The following is a 37-amino-acid chain: Large ribosomal subunit protein bL36 (37 aa).

Belongs to the bacterial ribosomal protein bL36 family.

The chain is Large ribosomal subunit protein bL36 from Thermomicrobium roseum (strain ATCC 27502 / DSM 5159 / P-2).